The chain runs to 55 residues: Protein CADMIUM TOLERANCE 1 (55 aa).

Residues 24-40 (GCLYACIFTALCCFCCY) traverse the membrane as a helical segment.

It belongs to the CYSTM1 family.

It is found in the cell membrane. The protein localises to the secreted. Its subcellular location is the cell wall. Confers resistance to heavy metal ions (e.g. cadmium (CdCl(2)) and copper (CuCl(2))) by chelating them at the plasma membrane of root cells, thus stopping their entry and reducing their accumulation. This Digitaria ciliaris (Southern crabgrass) protein is Protein CADMIUM TOLERANCE 1.